Consider the following 593-residue polypeptide: ATP-dependent lipid A-core flippase (593 aa).

Transmembrane regions (helical) follow at residues 33–53 (IGIV…EAGI), 75–95 (WYVP…QYTS), 137–157 (AIVF…VTLV), 164–184 (IFLL…VAVI), 262–282 (QPLT…IAVV), and 292–312 (GGFV…KHLI). The ABC transmembrane type-1 domain maps to 37–320 (VLAVVTMGVV…LIDVNQPLQR (284 aa)). An ABC transporter domain is found at 352–586 (IEFRAVSFDY…GGLYAHLHRI (235 aa)). Position 386 to 393 (386 to 393 (GPSGSGKT)) interacts with ATP.

This sequence belongs to the ABC transporter superfamily. Lipid exporter (TC 3.A.1.106) family. Homodimer.

It localises to the cell inner membrane. It carries out the reaction ATP + H2O + lipid A-core oligosaccharideSide 1 = ADP + phosphate + lipid A-core oligosaccharideSide 2.. Functionally, involved in lipopolysaccharide (LPS) biosynthesis. Translocates lipid A-core from the inner to the outer leaflet of the inner membrane. Transmembrane domains (TMD) form a pore in the inner membrane and the ATP-binding domain (NBD) is responsible for energy generation. The polypeptide is ATP-dependent lipid A-core flippase (Burkholderia orbicola (strain AU 1054)).